The primary structure comprises 746 residues: Polyribonucleotide nucleotidyltransferase (746 aa).

Residues Asp519 and Asp525 each contribute to the Mg(2+) site. The KH domain maps to 585–644 (PRVIAVKIPVDKIGEVIGPKGKMINQIQEDTGADISIEDDGTVYIGATNGPSADAARSAI). Residues 656-728 (GERYLGTVVK…DRGKLSLSPV (73 aa)) form the S1 motif domain.

The protein belongs to the polyribonucleotide nucleotidyltransferase family. Mg(2+) is required as a cofactor.

It localises to the cytoplasm. The catalysed reaction is RNA(n+1) + phosphate = RNA(n) + a ribonucleoside 5'-diphosphate. Its function is as follows. Involved in mRNA degradation. Catalyzes the phosphorolysis of single-stranded polyribonucleotides processively in the 3'- to 5'-direction. In Arthrobacter sp. (strain FB24), this protein is Polyribonucleotide nucleotidyltransferase.